Here is a 348-residue protein sequence, read N- to C-terminus: Galanin receptor type 1 (348 aa).

Residues 1–34 lie on the Extracellular side of the membrane; that stretch reads MELAMVNLSEGNGSDPEPPAPESRPLFGIGVENF. N-linked (GlcNAc...) asparagine glycosylation is found at asparagine 7 and asparagine 12. Residues 35-55 form a helical membrane-spanning segment; it reads ITLVVFGLIFAMGVLGNSLVI. Over 56–70 the chain is Cytoplasmic; sequence TVLARSKPGKPRSTT. A helical transmembrane segment spans residues 71-91; the sequence is NLFILNLSIADLAYLLFCIPF. Residues 92-109 lie on the Extracellular side of the membrane; the sequence is QATVYALPTWVLGAFICK. A disulfide bond links cysteine 108 and cysteine 186. Residues 110–131 form a helical membrane-spanning segment; sequence FIHYFFTVSMLVSIFTLAAMSV. Residues 132 to 151 lie on the Cytoplasmic side of the membrane; sequence DRYVAIVHSRRSSSLRVSRN. The chain crosses the membrane as a helical span at residues 152 to 172; sequence ALLGVGFIWALSIAMASPVAY. The Extracellular segment spans residues 173–197; that stretch reads HQRLFHRDSNQTFCWEQWPNKLHKK. Residue asparagine 182 is glycosylated (N-linked (GlcNAc...) asparagine). Residues 198 to 218 form a helical membrane-spanning segment; the sequence is AYVVCTFVFGYLLPLLLICFC. Over 219–247 the chain is Cytoplasmic; the sequence is YAKVLNHLHKKLKNMSKKSEASKKKTAQT. Residues 248–268 form a helical membrane-spanning segment; sequence VLVVVVVFGISWLPHHVVHLW. Topologically, residues 269–270 are extracellular; that stretch reads AE. A helical transmembrane segment spans residues 271-291; sequence FGAFPLTPASFFFRITAHCLA. The Cytoplasmic portion of the chain corresponds to 292–348; it reads YSNSSVNPIIYAFLSENFRKAYKQVFKCHVCDESPRSETKENKSRMDTPPSTNCTHV. Cysteine 319 is lipidated: S-palmitoyl cysteine. Over residues 328–337 the composition is skewed to basic and acidic residues; it reads SETKENKSRM. A disordered region spans residues 328-348; it reads SETKENKSRMDTPPSTNCTHV.

Belongs to the G-protein coupled receptor 1 family. Interacts with GRP39 AND HTR1A. Post-translationally, three cysteine residues are found in the C-terminus, at least one of which may be palmitoylated. As to expression, expression is detected in brain, spinal cord, heart and skeletal muscle.

It is found in the cell membrane. Receptor for the hormone galanin. The activity of this receptor is mediated by G proteins that inhibit adenylate cyclase activity. This is Galanin receptor type 1 (Galr1) from Mus musculus (Mouse).